A 301-amino-acid polypeptide reads, in one-letter code: Transcription factor bHLH103 (301 aa).

In terms of domain architecture, KRAB spans 29–106; it reads PRSAEIVVDF…LEGLFDSSEQ (78 aa). Disordered regions lie at residues 161-184 and 239-272; these read EKSG…ETPS and TSPH…PRQD. The 50-residue stretch at 180 to 229 folds into the bHLH domain; it reads LETPSHFPSFKVRKEKLGDRITALQQLVSPFGKTDTASVLHDAIDYIKFL. The span at 239–269 shows a compositional bias: polar residues; it reads TSPHLNSIGSGEQKQWSDKSSNNTHNQNCSP.

Homodimer. In terms of tissue distribution, mature root endodermis.

It localises to the nucleus. The protein is Transcription factor bHLH103 (BHLH103) of Arabidopsis thaliana (Mouse-ear cress).